A 445-amino-acid polypeptide reads, in one-letter code: Tubulin beta chain (445 aa).

GTP is bound by residues Gln11, Glu69, Ser138, Gly142, Thr143, Gly144, Asn205, and Asn227. Glu69 lines the Mg(2+) pocket.

This sequence belongs to the tubulin family. Dimer of alpha and beta chains. A typical microtubule is a hollow water-filled tube with an outer diameter of 25 nm and an inner diameter of 15 nM. Alpha-beta heterodimers associate head-to-tail to form protofilaments running lengthwise along the microtubule wall with the beta-tubulin subunit facing the microtubule plus end conferring a structural polarity. Microtubules usually have 13 protofilaments but different protofilament numbers can be found in some organisms and specialized cells. The cofactor is Mg(2+).

It localises to the cytoplasm. The protein localises to the cytoskeleton. Tubulin is the major constituent of microtubules, a cylinder consisting of laterally associated linear protofilaments composed of alpha- and beta-tubulin heterodimers. Microtubules grow by the addition of GTP-tubulin dimers to the microtubule end, where a stabilizing cap forms. Below the cap, tubulin dimers are in GDP-bound state, owing to GTPase activity of alpha-tubulin. This is Tubulin beta chain (TUB2) from Ajellomyces capsulatus (Darling's disease fungus).